The chain runs to 353 residues: DNA polymerase IV (353 aa).

The 182-residue stretch at 6 to 187 (IIHVDCDCFY…LPVSKLHGVG (182 aa)) folds into the UmuC domain. Asp-10 and Asp-105 together coordinate Mg(2+). Glu-106 is an active-site residue.

This sequence belongs to the DNA polymerase type-Y family. Monomer. The cofactor is Mg(2+).

It is found in the cytoplasm. The catalysed reaction is DNA(n) + a 2'-deoxyribonucleoside 5'-triphosphate = DNA(n+1) + diphosphate. Its function is as follows. Poorly processive, error-prone DNA polymerase involved in untargeted mutagenesis. Copies undamaged DNA at stalled replication forks, which arise in vivo from mismatched or misaligned primer ends. These misaligned primers can be extended by PolIV. Exhibits no 3'-5' exonuclease (proofreading) activity. May be involved in translesional synthesis, in conjunction with the beta clamp from PolIII. This Pseudomonas fluorescens (strain Pf0-1) protein is DNA polymerase IV.